Reading from the N-terminus, the 347-residue chain is Very-long-chain 3-oxoacyl-CoA reductase (347 aa).

A helical membrane pass occupies residues 20 to 40 (LLWVVFGLGVLKCTTLSLRFL). 7 residues coordinate NADP(+): Val66, Asp120, Asn147, Tyr223, Lys227, Val256, and Ser258. Tyr223 serves as the catalytic Proton donor. The active-site Lowers pKa of active site Tyr is Lys227.

It belongs to the short-chain dehydrogenases/reductases (SDR) family. Interacts with the fatty acid elongation system components ELO3 and TSC13.

It localises to the endoplasmic reticulum membrane. The catalysed reaction is a very-long-chain (3R)-3-hydroxyacyl-CoA + NADP(+) = a very-long-chain 3-oxoacyl-CoA + NADPH + H(+). Its pathway is lipid metabolism; fatty acid biosynthesis. Functionally, component of the microsomal membrane bound fatty acid elongation system, which produces the 26-carbon very long-chain fatty acids (VLCFA) from palmitate. Catalyzes the reduction of the 3-ketoacyl-CoA intermediate that is formed in each cycle of fatty acid elongation. VLCFAs serve as precursors for ceramide and sphingolipids. This chain is Very-long-chain 3-oxoacyl-CoA reductase, found in Saccharomyces cerevisiae (strain RM11-1a) (Baker's yeast).